Reading from the N-terminus, the 183-residue chain is Large ribosomal subunit protein uL5 (183 aa).

The protein belongs to the universal ribosomal protein uL5 family. Part of the 50S ribosomal subunit; part of the 5S rRNA/L5/L18/L25 subcomplex. Contacts the 5S rRNA and the P site tRNA. Forms a bridge to the 30S subunit in the 70S ribosome.

Functionally, this is one of the proteins that bind and probably mediate the attachment of the 5S RNA into the large ribosomal subunit, where it forms part of the central protuberance. In the 70S ribosome it contacts protein S13 of the 30S subunit (bridge B1b), connecting the 2 subunits; this bridge is implicated in subunit movement. Contacts the P site tRNA; the 5S rRNA and some of its associated proteins might help stabilize positioning of ribosome-bound tRNAs. This is Large ribosomal subunit protein uL5 from Kosmotoga olearia (strain ATCC BAA-1733 / DSM 21960 / TBF 19.5.1).